A 98-amino-acid polypeptide reads, in one-letter code: Ribonuclease kappa (98 aa).

A run of 2 helical transmembrane segments spans residues 13-33 (ACGI…GIFF) and 65-85 (VSYN…FSFC).

Belongs to the RNase K family. Interacts with the proton translocation complex V0 of the V-ATPase. Interacts with ATP6AP1.

Its subcellular location is the endomembrane system. The protein localises to the cytoplasmic vesicle. It localises to the clathrin-coated vesicle membrane. Its function is as follows. Endoribonuclease which preferentially cleaves ApU and ApG phosphodiester bonds. Hydrolyzes UpU bonds at a lower rate. Regulates the activity of vacuolar (H+)-ATPase (V-ATPase) which is responsible for acidifying and maintaining the pH of intracellular compartments. Required at an early stage of receptor-mediated endocytosis. This Mus musculus (Mouse) protein is Ribonuclease kappa (Rnasek).